Reading from the N-terminus, the 438-residue chain is Adenylosuccinate synthetase (438 aa).

GTP-binding positions include 12 to 18 (GDEGKGK) and 40 to 42 (GHT). Catalysis depends on Asp13, which acts as the Proton acceptor. Positions 13 and 40 each coordinate Mg(2+). Residues 13-16 (DEGK), 38-41 (NAGH), Thr128, Arg142, Gln223, Thr238, and Arg302 contribute to the IMP site. His41 acts as the Proton donor in catalysis. Substrate is bound at residue 298 to 304 (TTTGRPR). Residues Arg304, 330–332 (KLD), and 412–414 (GVG) each bind GTP.

It belongs to the adenylosuccinate synthetase family. In terms of assembly, homodimer. It depends on Mg(2+) as a cofactor.

Its subcellular location is the cytoplasm. The enzyme catalyses IMP + L-aspartate + GTP = N(6)-(1,2-dicarboxyethyl)-AMP + GDP + phosphate + 2 H(+). The protein operates within purine metabolism; AMP biosynthesis via de novo pathway; AMP from IMP: step 1/2. Plays an important role in the de novo pathway of purine nucleotide biosynthesis. Catalyzes the first committed step in the biosynthesis of AMP from IMP. This is Adenylosuccinate synthetase from Leifsonia xyli subsp. xyli (strain CTCB07).